The chain runs to 847 residues: Pollen-specific leucine-rich repeat extensin-like protein 2 (847 aa).

Residues Met1–Ala20 form the signal peptide. LRR repeat units follow at residues Ile45–Lys71, Leu106–Met130, Thr131–Lys153, Ala155–Trp178, Pro179–Lys202, Leu204–Lys224, Lys226–Met248, and Lys249–Asn273. 2 N-linked (GlcNAc...) asparagine glycosylation sites follow: Asn260 and Asn274. LRR repeat units follow at residues Leu296 to Lys319 and Pro321 to Gly343. The disordered stretch occupies residues Lys381–Tyr847. The segment covering Pro438–Lys484 has biased composition (basic and acidic residues). Composition is skewed to pro residues over residues Pro485–Pro499 and Val533–Thr642. The segment at Ser522–Tyr847 is contains the Ser-Pro(4) repeats. 3 stretches are compositionally biased toward polar residues: residues Gln667 to Ser682, Thr688 to Gln720, and Gln726 to Pro752. Composition is skewed to low complexity over residues Pro768–Glu783 and Asn797–Ser811. Positions Ser838–Tyr847 are enriched in pro residues.

Hydroxylated on proline residues in the S-P-P-P-P repeat. In terms of processing, O-glycosylated on hydroxyprolines. In terms of tissue distribution, expressed in flowers, stamen, pollen, and pollinated carpels (at protein level).

The protein resides in the secreted. It is found in the cell wall. In terms of biological role, modulates cell morphogenesis by regulating cell wall formation and assembly, and/or growth polarization. This Arabidopsis thaliana (Mouse-ear cress) protein is Pollen-specific leucine-rich repeat extensin-like protein 2 (PEX2).